The following is a 409-amino-acid chain: Lissencephaly-1 homolog (409 aa).

One can recognise a LisH domain in the interval 7–39; it reads QKEELNKAIADYLHQCGFEDTLNAFKQDANMPG. Positions 54–80 form a coiled coil; that stretch reads TSVIRLQKKVMDLETRLSEAEKEVHHG. The segment at 72–95 is disordered; that stretch reads EAEKEVHHGGGPKKTRSPEDWIPR. WD repeat units follow at residues 104 to 145, 146 to 187, 188 to 229, 231 to 269, 272 to 332, 335 to 374, and 377 to 409; these read GHRS…RTLK, GHTD…RTLH, GHDH…KTFQ, HGEW…CKCD, DHDH…CLVT, GHDN…CAKT, and AHEH…WECR.

Belongs to the WD repeat LIS1/nudF family.

The protein resides in the cytoplasm. The protein localises to the cytoskeleton. It is found in the microtubule organizing center. It localises to the centrosome. In terms of biological role, positively regulates the activity of the minus-end directed microtubule motor protein dynein. May enhance dynein-mediated microtubule sliding by targeting dynein to the microtubule plus end. Required for several dynein- and microtubule-dependent processes. In Nematostella vectensis (Starlet sea anemone), this protein is Lissencephaly-1 homolog.